The sequence spans 424 residues: Protein CapL (424 aa).

The protein belongs to the UDP-glucose/GDP-mannose dehydrogenase family.

Its pathway is capsule biogenesis; capsule polysaccharide biosynthesis. Its function is as follows. Required for the biosynthesis of type 1 capsular polysaccharide. The chain is Protein CapL (capL) from Staphylococcus aureus.